Consider the following 128-residue polypeptide: uncharacterized protein (128 aa).

This is an uncharacterized protein from Homo sapiens (Human).